A 120-amino-acid polypeptide reads, in one-letter code: NAD(P)H-quinone oxidoreductase subunit 3, chloroplastic (120 aa).

3 consecutive transmembrane segments (helical) span residues 9 to 29 (IFWA…LISG), 64 to 84 (MFAL…PWAM), and 88 to 108 (VLGV…IVGS).

The protein belongs to the complex I subunit 3 family. As to quaternary structure, NDH is composed of at least 16 different subunits, 5 of which are encoded in the nucleus.

Its subcellular location is the plastid. The protein resides in the chloroplast thylakoid membrane. The enzyme catalyses a plastoquinone + NADH + (n+1) H(+)(in) = a plastoquinol + NAD(+) + n H(+)(out). The catalysed reaction is a plastoquinone + NADPH + (n+1) H(+)(in) = a plastoquinol + NADP(+) + n H(+)(out). NDH shuttles electrons from NAD(P)H:plastoquinone, via FMN and iron-sulfur (Fe-S) centers, to quinones in the photosynthetic chain and possibly in a chloroplast respiratory chain. The immediate electron acceptor for the enzyme in this species is believed to be plastoquinone. Couples the redox reaction to proton translocation, and thus conserves the redox energy in a proton gradient. In Amborella trichopoda, this protein is NAD(P)H-quinone oxidoreductase subunit 3, chloroplastic.